A 238-amino-acid chain; its full sequence is Orotidine 5'-phosphate decarboxylase (238 aa).

Substrate-binding positions include D10, K32, 59 to 68 (DLKLHDIPNT), T122, R184, Q193, G213, and R214. K61 functions as the Proton donor in the catalytic mechanism.

It belongs to the OMP decarboxylase family. Type 1 subfamily. As to quaternary structure, homodimer.

It catalyses the reaction orotidine 5'-phosphate + H(+) = UMP + CO2. It functions in the pathway pyrimidine metabolism; UMP biosynthesis via de novo pathway; UMP from orotate: step 2/2. Its function is as follows. Catalyzes the decarboxylation of orotidine 5'-monophosphate (OMP) to uridine 5'-monophosphate (UMP). In Bacillus cereus (strain AH820), this protein is Orotidine 5'-phosphate decarboxylase.